Here is a 645-residue protein sequence, read N- to C-terminus: 1,4-alpha-glucan branching enzyme GlgB (645 aa).

The Nucleophile role is filled by aspartate 309. Residue glutamate 352 is the Proton donor of the active site. Residues 619–645 form a disordered region; it reads VKTRKGSKKQDGSKTKVRSNVTSRGKR. Positions 636-645 are enriched in polar residues; it reads RSNVTSRGKR.

It belongs to the glycosyl hydrolase 13 family. GlgB subfamily. In terms of assembly, monomer.

It catalyses the reaction Transfers a segment of a (1-&gt;4)-alpha-D-glucan chain to a primary hydroxy group in a similar glucan chain.. It functions in the pathway glycan biosynthesis; glycogen biosynthesis. In terms of biological role, catalyzes the formation of the alpha-1,6-glucosidic linkages in glycogen by scission of a 1,4-alpha-linked oligosaccharide from growing alpha-1,4-glucan chains and the subsequent attachment of the oligosaccharide to the alpha-1,6 position. This is 1,4-alpha-glucan branching enzyme GlgB from Bacillus cereus (strain G9842).